The primary structure comprises 61 residues: Small ribosomal subunit protein uS14 (61 aa).

Zn(2+)-binding residues include cysteine 24, cysteine 27, cysteine 40, and cysteine 43.

It belongs to the universal ribosomal protein uS14 family. Zinc-binding uS14 subfamily. Part of the 30S ribosomal subunit. Contacts proteins S3 and S10. Zn(2+) is required as a cofactor.

Its function is as follows. Binds 16S rRNA, required for the assembly of 30S particles and may also be responsible for determining the conformation of the 16S rRNA at the A site. This is Small ribosomal subunit protein uS14 from Petrotoga mobilis (strain DSM 10674 / SJ95).